The sequence spans 467 residues: ATP-dependent protease ATPase subunit HslU (467 aa).

ATP is bound by residues isoleucine 20, 62–67 (GVGKTE), aspartate 280, glutamate 345, and arginine 417.

Belongs to the ClpX chaperone family. HslU subfamily. As to quaternary structure, a double ring-shaped homohexamer of HslV is capped on each side by a ring-shaped HslU homohexamer. The assembly of the HslU/HslV complex is dependent on binding of ATP.

The protein localises to the cytoplasm. In terms of biological role, ATPase subunit of a proteasome-like degradation complex; this subunit has chaperone activity. The binding of ATP and its subsequent hydrolysis by HslU are essential for unfolding of protein substrates subsequently hydrolyzed by HslV. HslU recognizes the N-terminal part of its protein substrates and unfolds these before they are guided to HslV for hydrolysis. The sequence is that of ATP-dependent protease ATPase subunit HslU from Ligilactobacillus salivarius (strain UCC118) (Lactobacillus salivarius).